A 907-amino-acid chain; its full sequence is Translation initiation factor IF-2 (907 aa).

Basic and acidic residues-rich tracts occupy residues 223–235, 251–263, and 270–281; these read LAQRRQEEAKRAA, VAKEAPKPEEKNA, and GGKDWNDSDGKK. The interval 223 to 320 is disordered; that stretch reads LAQRRQEEAK…ENQQHAFTAP (98 aa). Residues 407–576 form the tr-type G domain; sequence PRPPVVTVMG…LLQAEVLELK (170 aa). Residues 416 to 423 are G1; that stretch reads GHVDHGKT. A GTP-binding site is contributed by 416–423; sequence GHVDHGKT. Positions 441 to 445 are G2; it reads GITQH. A G3 region spans residues 462–465; sequence DTPG. GTP contacts are provided by residues 462-466 and 516-519; these read DTPGH and NKID. A G4 region spans residues 516–519; sequence NKID. The tract at residues 552 to 554 is G5; it reads SAK.

It belongs to the TRAFAC class translation factor GTPase superfamily. Classic translation factor GTPase family. IF-2 subfamily.

The protein resides in the cytoplasm. Functionally, one of the essential components for the initiation of protein synthesis. Protects formylmethionyl-tRNA from spontaneous hydrolysis and promotes its binding to the 30S ribosomal subunits. Also involved in the hydrolysis of GTP during the formation of the 70S ribosomal complex. This Methylobacillus flagellatus (strain ATCC 51484 / DSM 6875 / VKM B-1610 / KT) protein is Translation initiation factor IF-2.